A 1026-amino-acid polypeptide reads, in one-letter code: Multidrug resistance protein MdtC (1026 aa).

A run of 11 helical transmembrane segments spans residues 15–35 (ILIA…LPVA), 333–353 (EVEE…FLFL), 360–380 (LIPA…MYLC), 387–407 (LSLM…IVVL), 431–451 (VGFT…PLLL), 463–483 (FAVT…TLTP), 528–548 (LVGV…IAIP), 853–873 (LILI…LYES), 897–917 (LFNA…IGIV), 953–973 (PIMM…LSGG), and 984–1004 (ITIV…TPVV).

The protein belongs to the resistance-nodulation-cell division (RND) (TC 2.A.6) family. MdtC subfamily. Part of a tripartite efflux system composed of MdtA, MdtB and MdtC. MdtC forms a heteromultimer with MdtB.

It localises to the cell inner membrane. The sequence is that of Multidrug resistance protein MdtC from Salmonella paratyphi C (strain RKS4594).